Here is a 425-residue protein sequence, read N- to C-terminus: tRNA(Ile)-lysidine synthase (425 aa).

27–32 contacts ATP; sequence SGGLDS.

Belongs to the tRNA(Ile)-lysidine synthase family.

The protein resides in the cytoplasm. The catalysed reaction is cytidine(34) in tRNA(Ile2) + L-lysine + ATP = lysidine(34) in tRNA(Ile2) + AMP + diphosphate + H(+). Its function is as follows. Ligates lysine onto the cytidine present at position 34 of the AUA codon-specific tRNA(Ile) that contains the anticodon CAU, in an ATP-dependent manner. Cytidine is converted to lysidine, thus changing the amino acid specificity of the tRNA from methionine to isoleucine. The sequence is that of tRNA(Ile)-lysidine synthase from Streptococcus pneumoniae serotype 2 (strain D39 / NCTC 7466).